The chain runs to 270 residues: Energy-coupling factor transporter ATP-binding protein EcfA (270 aa).

Residues 5–238 (VEIENLTFFY…QLLEQNGLKA (234 aa)) form the ABC transporter domain. 38 to 45 (GHNGAGKS) lines the ATP pocket.

This sequence belongs to the ABC transporter superfamily. Energy-coupling factor EcfA family. Forms a stable energy-coupling factor (ECF) transporter complex composed of 2 membrane-embedded substrate-binding proteins (S component), 2 ATP-binding proteins (A component) and 2 transmembrane proteins (T component).

Its subcellular location is the cell membrane. Functionally, ATP-binding (A) component of a common energy-coupling factor (ECF) ABC-transporter complex. Unlike classic ABC transporters this ECF transporter provides the energy necessary to transport a number of different substrates. This is Energy-coupling factor transporter ATP-binding protein EcfA from Carboxydothermus hydrogenoformans (strain ATCC BAA-161 / DSM 6008 / Z-2901).